Consider the following 158-residue polypeptide: NAD(P)H-quinone oxidoreductase subunit J, chloroplastic (158 aa).

It belongs to the complex I 30 kDa subunit family. As to quaternary structure, NDH is composed of at least 16 different subunits, 5 of which are encoded in the nucleus.

It localises to the plastid. The protein localises to the chloroplast thylakoid membrane. The enzyme catalyses a plastoquinone + NADH + (n+1) H(+)(in) = a plastoquinol + NAD(+) + n H(+)(out). It carries out the reaction a plastoquinone + NADPH + (n+1) H(+)(in) = a plastoquinol + NADP(+) + n H(+)(out). Functionally, NDH shuttles electrons from NAD(P)H:plastoquinone, via FMN and iron-sulfur (Fe-S) centers, to quinones in the photosynthetic chain and possibly in a chloroplast respiratory chain. The immediate electron acceptor for the enzyme in this species is believed to be plastoquinone. Couples the redox reaction to proton translocation, and thus conserves the redox energy in a proton gradient. The polypeptide is NAD(P)H-quinone oxidoreductase subunit J, chloroplastic (Lupinus luteus (European yellow lupine)).